Here is a 664-residue protein sequence, read N- to C-terminus: Macoilin (664 aa).

4 helical membrane-spanning segments follow: residues 28–48 (TFLYLKFLVVWALVLLADFVL), 75–95 (AFSVFFVCVAFTSNIICLLFI), 120–140 (VCLPTVSLWILFVYIEAAIRF), and 154–174 (FAAHCIGYPVVTLGFGFKSYV). Residues 253-265 (REKGKEKDKDAKK) are compositionally biased toward basic and acidic residues. The tract at residues 253–274 (REKGKEKDKDAKKHNLGINNNN) is disordered. Phosphoserine is present on S305. Over residues 320 to 348 (KNYKNASGVVNSSPRSHSATNGSIPSSSS) the composition is skewed to polar residues. The disordered stretch occupies residues 320–367 (KNYKNASGVVNSSPRSHSATNGSIPSSSSKNEKKQKCTSKSPSAHKDL). N324 is a glycosylation site (N-linked (GlcNAc...) asparagine). The residue at position 332 (S332) is a Phosphoserine. N-linked (GlcNAc...) asparagine glycans are attached at residues N340 and N452. 2 positions are modified to phosphoserine: S631 and S634. The interval 631–664 (SPLSPVSPHYSSKFVETSPSGLDPNASVYQPLKK) is disordered. The N-linked (GlcNAc...) asparagine glycan is linked to N655.

It belongs to the macoilin family.

It is found in the rough endoplasmic reticulum membrane. The protein localises to the nucleus membrane. Its function is as follows. Plays a role in the regulation of neuronal activity. The polypeptide is Macoilin (MACO1) (Bos taurus (Bovine)).